Consider the following 56-residue polypeptide: U-limacoditoxin(3)-Dv21 (56 aa).

Positions 1-19 (MKKVIMLLLIFALFAYALS) are cleaved as a signal peptide. 3 cysteine pairs are disulfide-bonded: cysteine 26/cysteine 41, cysteine 33/cysteine 46, and cysteine 40/cysteine 53.

It belongs to the limacoditoxin-22 family. In terms of tissue distribution, expressed by the venom secretory cell of the spine. The spine is a cuticular structure containing a single large nucleated venom-secreting cell at its base. It is an independent unit capable of producing, storing and injecting venom. On the back of D.vulnerans caterpillars, spines are grouped together by 50 to 100 to form scoli, of which there are eight in D.vulnerans.

It localises to the secreted. Its function is as follows. Probable toxin. Shows a moderate antiparasitic activity against the major pathogenic nematode of ruminants (H.contortus, IC(50)=22.1 uM). Does not show insecticidal activities. Does not induce increase in intracellular calcium in mouse DRG neurons, suggesting that it does not induce pain. This is U-limacoditoxin(3)-Dv21 from Doratifera vulnerans (Mottled cup moth).